We begin with the raw amino-acid sequence, 471 residues long: O-acetyltransferase astG (471 aa).

It belongs to the fumigaclavine B O-acetyltransferase family. As to quaternary structure, monomer.

The enzyme catalyses dideacetyl astellolide A + acetyl-CoA = 14-deacetyl astellolide A + CoA. It catalyses the reaction dideacetyl astellolide B + acetyl-CoA = 14-deacetyl astellolide B + CoA. The protein operates within secondary metabolite biosynthesis; terpenoid biosynthesis. Functionally, O-acetyltransferase; part of the gene cluster that mediates the biosynthesis of astellolides, drimane-type sesquiterpene esters that show antimicrobial, anti-inflammatory, and anti-tumor activities. The first step in astellolide biosynthesis is performed by the sesquiterpene cyclase astC that catalyzes the formation of drimanyl pyrophosphate from farnesyl pyrophosphate. Drimanyl pyrophosphate is then dephosphorylated by the sesquiterpene phosphatase astI to produce drimanyl monophosphate which is further dephosphorylated to drim-8-ene-11-ol by atsK. Drim-8-ene-11-ol is converted to confertifolin, probably by the cytochrome P450 monooxygenase astD and/or the dehydrogenase astE. The cytochrome P450 monooxygenases astB, astF and astJ then hydroxylate confertifolin at C6, C14, or C15 to form trihydroxy confertifolin. The nonribosomal peptide synthetase astA catalyzes ester bond formation between trihydroxy contifolin and benzoic acid (BA) or 4-hydroxy benzoic acid (4HBA), leading to the formation of dideacetyl astellolides A and B, respectively. Finally, the O-acetyltransferase astG converts dideacetyl astellolides A and B into deacetyl astellolides A and B. The polypeptide is O-acetyltransferase astG (Aspergillus oryzae (strain ATCC 42149 / RIB 40) (Yellow koji mold)).